We begin with the raw amino-acid sequence, 132 residues long: Ribosome-binding factor A (132 aa).

This sequence belongs to the RbfA family. In terms of assembly, monomer. Binds 30S ribosomal subunits, but not 50S ribosomal subunits or 70S ribosomes.

Its subcellular location is the cytoplasm. Its function is as follows. One of several proteins that assist in the late maturation steps of the functional core of the 30S ribosomal subunit. Associates with free 30S ribosomal subunits (but not with 30S subunits that are part of 70S ribosomes or polysomes). Required for efficient processing of 16S rRNA. May interact with the 5'-terminal helix region of 16S rRNA. This is Ribosome-binding factor A from Rhizorhabdus wittichii (strain DSM 6014 / CCUG 31198 / JCM 15750 / NBRC 105917 / EY 4224 / RW1) (Sphingomonas wittichii).